A 301-amino-acid polypeptide reads, in one-letter code: Probable 2-(5''-triphosphoribosyl)-3'-dephosphocoenzyme-A synthase (301 aa).

This sequence belongs to the CitG/MdcB family.

The catalysed reaction is 3'-dephospho-CoA + ATP = 2'-(5''-triphospho-alpha-D-ribosyl)-3'-dephospho-CoA + adenine. The chain is Probable 2-(5''-triphosphoribosyl)-3'-dephosphocoenzyme-A synthase from Pectobacterium carotovorum subsp. carotovorum (strain PC1).